The chain runs to 169 residues: Glycine-rich RNA-binding protein 8 (169 aa).

Residues Tyr-6–Ser-84 enclose the RRM domain. Arg-47 carries the ADP-ribosylarginine; by HopU1 modification. The interval Asn-80–Gly-99 is disordered. Residues Gly-86–Gly-99 are compositionally biased toward gly residues. Residues Gly-86–Gly-168 are glycine-rich (GR) required for cell-to-cell movement. A nuclear targeting sequence (M9) region spans residues Gly-95 to Tyr-143. Ser-103 is modified (phosphoserine). The segment at Gly-130–Trp-169 is disordered.

It belongs to the GR-RBP family. In terms of assembly, interacts with TRN1. Binds to small phloem-mobile single-stranded RNAs (ss-sRNA, e.g. small interfering RNA (siRNA) and microRNA (miRNA)) in the phloeme exudate, including viral-derived sRNA (vsiRNA). ADP-ribosylated by the Pseudomonas syringae type III effector HopU1. ADP-ribosylation reduces the ability of the protein to bind RNA. As to expression, ubiquitous.

It is found in the cytoplasm. It localises to the nucleus. The protein localises to the secreted. Plays a role in RNA transcription or processing during stress. Binds RNAs and DNAs sequence with a preference to single-stranded nucleic acids. Involved in mRNA alternative splicing of numerous targets by modulating splice site selection. Negatively regulates the circadian oscillations of its own transcript as well as RBG7 transcript. Forms an interlocked post-transcriptional negative feedback loop with the RBG7 autoregulatory circuit. Both proteins negatively autoregulate and reciprocally crossregulate by binding to their pre-mRNAs and promoting unproductive splicing coupled to degradation via the NMD pathway. Target of the Pseudomonas syringae type III effector HopU1. Mediates cell-to-cell trafficking of RNA interference (RNAi) signals (small RNAs (sRNA), e.g. small interfering RNA (siRNA) and microRNA (miRNA)) which regulate growth and development, as well as responses to environmental inputs, including pathogen attack; can compromise zucchini yellow mosaic virus (ZYMV) and tobacco rattle virus (TRV) infections at the early stage. The chain is Glycine-rich RNA-binding protein 8 from Arabidopsis thaliana (Mouse-ear cress).